A 238-amino-acid chain; its full sequence is uncharacterized protein (238 aa).

The tract at residues Glu219–Ile238 is disordered. The span at Asp227 to Ile238 shows a compositional bias: acidic residues.

This is an uncharacterized protein from Buchnera aphidicola subsp. Acyrthosiphon pisum (strain APS) (Acyrthosiphon pisum symbiotic bacterium).